Here is a 490-residue protein sequence, read N- to C-terminus: ATP synthase subunit beta, plastid (490 aa).

170–177 (GGAGVGKT) provides a ligand contact to ATP.

It belongs to the ATPase alpha/beta chains family. As to quaternary structure, F-type ATPases have 2 components, CF(1) - the catalytic core - and CF(0) - the membrane proton channel. CF(1) has five subunits: alpha(3), beta(3), gamma(1), delta(1), epsilon(1). CF(0) has four main subunits: a(1), b(1), b'(1) and c(9-12).

Its subcellular location is the plastid membrane. The catalysed reaction is ATP + H2O + 4 H(+)(in) = ADP + phosphate + 5 H(+)(out). In terms of biological role, produces ATP from ADP in the presence of a proton gradient across the membrane. The catalytic sites are hosted primarily by the beta subunits. The polypeptide is ATP synthase subunit beta, plastid (Cuscuta exaltata (Tall dodder)).